The chain runs to 720 residues: Casein kinase II subunit alpha'-interacting protein (720 aa).

Residues 227-249 (LSSPSFTNRLQRNSFPPTSSSLE) show a composition bias toward polar residues. 5 disordered regions span residues 227-250 (LSSP…SLEF), 264-303 (KPLK…SRRL), 333-366 (QNTA…SPKP), 602-640 (TQVQ…VDPT), and 678-698 (LRQS…KCLK). Residues 608-626 (SSSSSSSCSSVSSSSSASS) show a composition bias toward low complexity. Over residues 630-640 (PSPPTPWVDPT) the composition is skewed to pro residues. Basic residues predominate over residues 687–698 (KPVRSHNSKCLK).

As to quaternary structure, interacts (via C-terminus) with CSNK2A2. Phosphorylated by CK2 (casein kinase II), specifically by complexes containing catalytic subunit CSNK2A2. In terms of tissue distribution, expressed exclusively in testis (at protein level). Within testis, expressed mainly in the intermediate compartment of the seminiferous tubules with weaker expression in the basal and adluminal compartments.

It localises to the nucleus. Functionally, may play a role in chromatin regulation of male germ cells. The polypeptide is Casein kinase II subunit alpha'-interacting protein (Mus musculus (Mouse)).